Reading from the N-terminus, the 570-residue chain is Proline--tRNA ligase (570 aa).

It belongs to the class-II aminoacyl-tRNA synthetase family. ProS type 1 subfamily. Homodimer.

It localises to the cytoplasm. The catalysed reaction is tRNA(Pro) + L-proline + ATP = L-prolyl-tRNA(Pro) + AMP + diphosphate. In terms of biological role, catalyzes the attachment of proline to tRNA(Pro) in a two-step reaction: proline is first activated by ATP to form Pro-AMP and then transferred to the acceptor end of tRNA(Pro). As ProRS can inadvertently accommodate and process non-cognate amino acids such as alanine and cysteine, to avoid such errors it has two additional distinct editing activities against alanine. One activity is designated as 'pretransfer' editing and involves the tRNA(Pro)-independent hydrolysis of activated Ala-AMP. The other activity is designated 'posttransfer' editing and involves deacylation of mischarged Ala-tRNA(Pro). The misacylated Cys-tRNA(Pro) is not edited by ProRS. The chain is Proline--tRNA ligase from Clostridium perfringens (strain SM101 / Type A).